A 384-amino-acid polypeptide reads, in one-letter code: MTPQFRNTVERMYRDTFSYNFNNRPILSRRNTVWLCYEVKTKDPSRPPLDAKIFRGQVYSELKYHPEMRFFHWFSKWRKLHRDQEYEVTWYISWSPCTKCTRNVATFLAEDPKVTLTIFVARLYYFWDQDYQEALRSLCQKRDGPRATMKIMNYDEFQHCWSKFVYSQRELFEPWNNLPKYYMLLHIMLGEILRHSMDPPTFTSNFNNEHWVRGRHETYLCYEVERLHNDTWVLLNQRRGFLCNQAPHKHGFLEGRHAELCFLDVIPFWKLDLHQDYRVTCFTSWSPCFSCAQEMAKFISNKKHVSLCIFAARIYDDQGRCQEGLRTLAEAGAKISIMTYSEFKHCWDTFVYHQGCPFQPWDGLEEHSQALSGRLQAILQNQGN.

The essential for cytoplasmic localization stretch occupies residues M1–S60. 2 CMP/dCMP-type deaminase domains span residues R29 to L138 and G214 to L328. A Phosphothreonine; by PKA modification is found at T32. The Zn(2+) site is built by H65, C97, and C100. A necessary for homooligomerization region spans residues E209–S336. Residues R213 to R215 are interaction with DNA. T218 carries the phosphothreonine; by PKA and CAMK2 modification. Position 257 (H257) interacts with Zn(2+). The Proton donor role is filled by E259. 2 residues coordinate Zn(2+): C288 and C291. The interval R313–R320 is interaction with DNA.

Belongs to the cytidine and deoxycytidylate deaminase family. In terms of assembly, homodimer. Homooligomer. Can bind RNA to form ribonucleoprotein complexes of high-molecular-mass (HMM) or low-molecular-mass (LMM). HMM is inactive and heterogeneous in protein composition because of binding nonselectively to cellular RNAs, which in turn are associated with variety of cellular proteins. The LMM form which is enzymatically active has few or no RNAs associated. Its ability to form homooligomer is distinct from its ability to assemble into HMM. Interacts with APOBEC3B, APOBEC3F, MOV10, AGO2, EIF4E, EIF4ENIF1, DCP2 and DDX6 in an RNA-dependent manner. Interacts with AGO1, AGO3 and PKA/PRKACA. Zn(2+) serves as cofactor.

The protein resides in the cytoplasm. It localises to the nucleus. Its subcellular location is the P-body. It carries out the reaction a 2'-deoxycytidine in single-stranded DNA + H2O + H(+) = a 2'-deoxyuridine in single-stranded DNA + NH4(+). In terms of biological role, DNA deaminase (cytidine deaminase) which acts as an inhibitor of retrovirus replication and retrotransposon mobility. After the penetration of retroviral nucleocapsids into target cells of infection and the initiation of reverse transcription, it can induce the conversion of cytosine to uracil in the minus-sense single-strand viral DNA, leading to G-to-A hypermutations in the subsequent plus-strand viral DNA. The resultant detrimental levels of mutations in the proviral genome, along with a deamination-independent mechanism that works prior to the proviral integration, together exert efficient antiretroviral effects in infected target cells. Selectively targets single-stranded DNA and does not deaminate double-stranded DNA or single- or double-stranded RNA. The sequence is that of DNA dC-&gt;dU-editing enzyme APOBEC-3G (APOBEC3G) from Gorilla gorilla gorilla (Western lowland gorilla).